Reading from the N-terminus, the 171-residue chain is Small ribosomal subunit protein uS5 (171 aa).

One can recognise an S5 DRBM domain in the interval 15-78 (LKDRLVAINR…EAAKKNLTRV (64 aa)).

This sequence belongs to the universal ribosomal protein uS5 family. In terms of assembly, part of the 30S ribosomal subunit. Contacts proteins S4 and S8.

Functionally, with S4 and S12 plays an important role in translational accuracy. Its function is as follows. Located at the back of the 30S subunit body where it stabilizes the conformation of the head with respect to the body. The protein is Small ribosomal subunit protein uS5 of Phocaeicola vulgatus (strain ATCC 8482 / DSM 1447 / JCM 5826 / CCUG 4940 / NBRC 14291 / NCTC 11154) (Bacteroides vulgatus).